Consider the following 499-residue polypeptide: MAMSDKKDVVLIGAGVLSTTFGSMLKTIAPDWDIHLYERLDRPGIESSNERNNAGTGHAALCELNYTVQQPDGSIDIEKAKEINEQFEISKQFWGHLVKSGEIQNPKEFINPLPHISFVRGKNNVKFLKDRYEAMKQFPMFDNIEYTEDIEEMRKWIPLMMKGREDKGYMAASKIDEGTDVNYGELTRKMAQNLKNSPNVEVQYKHEVVDFERLSNGKWSVKIKNLNNGQVFEHQTDYVFIGAGGGAIPLLQKTGIPESKHLGGFPISGQFIACTNPQVIEQHDAKVYGKEPPGTPPMTVPHLDTRYIDGERTLLFGPFANVGPKFLKHGSNLDLFKSIKPYNITTLLASAVKNLPLIKYSFDQVIMTKEGCMNHLRTFYPEARDEDWQVYTAGKRVQVIKDTEENGKGFIQFGTEVVNSEDHSVIALLGESPGASTSVSVALEVLEKNFPEYAKNWEPKIKKMIPSYGESLIDDVQLMRKIRKQTSKDLELGFYDKAK.

Belongs to the MQO family. FAD is required as a cofactor.

The enzyme catalyses (S)-malate + a quinone = a quinol + oxaloacetate. The protein operates within carbohydrate metabolism; tricarboxylic acid cycle; oxaloacetate from (S)-malate (quinone route): step 1/1. The polypeptide is Probable malate:quinone oxidoreductase 4 (Staphylococcus epidermidis (strain ATCC 35984 / DSM 28319 / BCRC 17069 / CCUG 31568 / BM 3577 / RP62A)).